A 447-amino-acid chain; its full sequence is Tubulin beta-5 chain (447 aa).

GTP contacts are provided by Gln11, Glu69, Ser138, Gly142, Thr143, Gly144, Asn204, and Asn226. Position 69 (Glu69) interacts with Mg(2+).

This sequence belongs to the tubulin family. Dimer of alpha and beta chains. A typical microtubule is a hollow water-filled tube with an outer diameter of 25 nm and an inner diameter of 15 nM. Alpha-beta heterodimers associate head-to-tail to form protofilaments running lengthwise along the microtubule wall with the beta-tubulin subunit facing the microtubule plus end conferring a structural polarity. Microtubules usually have 13 protofilaments but different protofilament numbers can be found in some organisms and specialized cells. Requires Mg(2+) as cofactor.

The protein localises to the cytoplasm. The protein resides in the cytoskeleton. Its function is as follows. Tubulin is the major constituent of microtubules, a cylinder consisting of laterally associated linear protofilaments composed of alpha- and beta-tubulin heterodimers. Microtubules grow by the addition of GTP-tubulin dimers to the microtubule end, where a stabilizing cap forms. Below the cap, tubulin dimers are in GDP-bound state, owing to GTPase activity of alpha-tubulin. The protein is Tubulin beta-5 chain (TUBB5) of Triticum aestivum (Wheat).